Here is a 191-residue protein sequence, read N- to C-terminus: Thymidylate kinase (191 aa).

Residue 7-14 coordinates ATP; that stretch reads GIDGVGKS.

Belongs to the thymidylate kinase family.

The catalysed reaction is dTMP + ATP = dTDP + ADP. In terms of biological role, phosphorylation of dTMP to form dTDP in both de novo and salvage pathways of dTTP synthesis. This chain is Thymidylate kinase, found in Helicobacter acinonychis (strain Sheeba).